Here is a 338-residue protein sequence, read N- to C-terminus: Aspartate carbamoyltransferase catalytic subunit (338 aa).

Positions 59 and 60 each coordinate carbamoyl phosphate. Position 87 (Lys-87) interacts with L-aspartate. Carbamoyl phosphate contacts are provided by Arg-109, His-142, and Gln-145. Positions 182 and 253 each coordinate L-aspartate. Carbamoyl phosphate is bound by residues Gly-294 and Pro-295.

It belongs to the aspartate/ornithine carbamoyltransferase superfamily. ATCase family. Heterododecamer (2C3:3R2) of six catalytic PyrB chains organized as two trimers (C3), and six regulatory PyrI chains organized as three dimers (R2).

It catalyses the reaction carbamoyl phosphate + L-aspartate = N-carbamoyl-L-aspartate + phosphate + H(+). It functions in the pathway pyrimidine metabolism; UMP biosynthesis via de novo pathway; (S)-dihydroorotate from bicarbonate: step 2/3. Functionally, catalyzes the condensation of carbamoyl phosphate and aspartate to form carbamoyl aspartate and inorganic phosphate, the committed step in the de novo pyrimidine nucleotide biosynthesis pathway. The sequence is that of Aspartate carbamoyltransferase catalytic subunit from Prochlorococcus marinus (strain SARG / CCMP1375 / SS120).